The chain runs to 465 residues: Ribulose bisphosphate carboxylase large chain (465 aa).

Position 4 is an N6,N6,N6-trimethyllysine (lysine 4). The substrate site is built by asparagine 113 and threonine 163. Catalysis depends on lysine 165, which acts as the Proton acceptor. Position 167 (lysine 167) interacts with substrate. Positions 191, 193, and 194 each coordinate Mg(2+). Lysine 191 bears the N6-carboxylysine mark. Histidine 284 functions as the Proton acceptor in the catalytic mechanism. Residues arginine 285, histidine 317, and serine 369 each contribute to the substrate site.

The protein belongs to the RuBisCO large chain family. Type I subfamily. Heterohexadecamer of 8 large chains and 8 small chains; disulfide-linked. The disulfide link is formed within the large subunit homodimers. Requires Mg(2+) as cofactor. In terms of processing, the disulfide bond which can form in the large chain dimeric partners within the hexadecamer appears to be associated with oxidative stress and protein turnover.

It localises to the plastid. Its subcellular location is the chloroplast. It catalyses the reaction 2 (2R)-3-phosphoglycerate + 2 H(+) = D-ribulose 1,5-bisphosphate + CO2 + H2O. The enzyme catalyses D-ribulose 1,5-bisphosphate + O2 = 2-phosphoglycolate + (2R)-3-phosphoglycerate + 2 H(+). Its function is as follows. RuBisCO catalyzes two reactions: the carboxylation of D-ribulose 1,5-bisphosphate, the primary event in carbon dioxide fixation, as well as the oxidative fragmentation of the pentose substrate in the photorespiration process. Both reactions occur simultaneously and in competition at the same active site. The sequence is that of Ribulose bisphosphate carboxylase large chain from Bauera rubioides (Dog rose).